A 669-amino-acid chain; its full sequence is DNA ligase (669 aa).

NAD(+) is bound by residues aspartate 34–aspartate 38, serine 83–leucine 84, and glutamate 114. The active-site N6-AMP-lysine intermediate is the lysine 116. Positions 137, 171, 287, and 311 each coordinate NAD(+). Zn(2+) contacts are provided by cysteine 405, cysteine 408, cysteine 423, and cysteine 428. In terms of domain architecture, BRCT spans asparagine 591–lysine 669.

It belongs to the NAD-dependent DNA ligase family. LigA subfamily. Mg(2+) is required as a cofactor. The cofactor is Mn(2+).

It catalyses the reaction NAD(+) + (deoxyribonucleotide)n-3'-hydroxyl + 5'-phospho-(deoxyribonucleotide)m = (deoxyribonucleotide)n+m + AMP + beta-nicotinamide D-nucleotide.. Its function is as follows. DNA ligase that catalyzes the formation of phosphodiester linkages between 5'-phosphoryl and 3'-hydroxyl groups in double-stranded DNA using NAD as a coenzyme and as the energy source for the reaction. It is essential for DNA replication and repair of damaged DNA. This Bacillus cereus (strain 03BB102) protein is DNA ligase.